Consider the following 80-residue polypeptide: Protein YibX (80 aa).

This Escherichia coli (strain K12) protein is Protein YibX.